A 571-amino-acid polypeptide reads, in one-letter code: Cationic amino acid transporter 8 (571 aa).

N-linked (GlcNAc...) asparagine glycosylation occurs at N35. The next 6 membrane-spanning stretches (helical) occupy residues F39–W59, S94–Y114, I117–L137, F148–I168, T177–L197, and I217–F237. N-linked (GlcNAc...) asparagine glycosylation is found at N298, N325, and N346. A helical membrane pass occupies residues L365–F385. N386 carries N-linked (GlcNAc...) asparagine glycosylation. The next 5 helical transmembrane spans lie at S405–G425, S433–I453, V461–I481, V488–C508, and V528–F548.

This sequence belongs to the SLC43A transporter (TC 2.A.1.44) family.

Its subcellular location is the membrane. The catalysed reaction is L-arginine(in) = L-arginine(out). Functionally, sodium-independent cationic amino acid transporter. Transports L-arginine, L-lysine, L-histidine and L-ornithine. The protein is Cationic amino acid transporter 8 of Plasmodium vivax (strain Salvador I).